The chain runs to 2979 residues: Polyketide synthase-nonribosomal peptide synthetase TwmB (2979 aa).

Positions 5-435 (GAEIAIIGSG…GTNAHAILES (431 aa)) constitute a Ketosynthase family 3 (KS3) domain. Residues cysteine 176, histidine 315, and histidine 355 each act as for beta-ketoacyl synthase activity in the active site. The tract at residues 549–864 (VFTGQGAQWA…PYTGLFTRGV (316 aa)) is malonyl-CoA:ACP transacylase (MAT) domain. The active-site For malonyltransferase activity is serine 643. Residues 936–1070 (HDLLGHLTPN…GRVRIHLGEA (135 aa)) form an N-terminal hotdog fold region. Residues 936-1234 (HDLLGHLTPN…ECVPFSRQTA (299 aa)) are dehydratase (DH) domain. One can recognise a PKS/mFAS DH domain in the interval 936 to 1235 (HDLLGHLTPN…CVPFSRQTAK (300 aa)). Catalysis depends on histidine 968, which acts as the Proton acceptor; for dehydratase activity. Residues 1085-1235 (LVSVSEKKFY…CVPFSRQTAK (151 aa)) are C-terminal hotdog fold. The active-site Proton donor; for dehydratase activity is aspartate 1141. The interval 1387 to 1572 (NFTAHLAGIL…GIDTSTVEQP (186 aa)) is inactive methyltransferase (MT) domain. The ketoreductase (KR)domain stretch occupies residues 2098-2271 (TYWLVGLTGG…AASVMDIGAV (174 aa)). One can recognise a Carrier domain in the interval 2380–2465 (RNNEEAYGIV…ELVDTATEAI (86 aa)). Position 2425 is an O-(pantetheine 4'-phosphoryl)serine (serine 2425). The interval 2476-2497 (YPAEQTSSQNSDSGQDMASSFD) is disordered. Over residues 2479–2497 (EQTSSQNSDSGQDMASSFD) the composition is skewed to polar residues. The segment at 2534-2970 (KSIPVSFTQA…MTLGQAALAE (437 aa)) is condensation.

In terms of assembly, interacts with TwmE. Pantetheine 4'-phosphate serves as cofactor.

It catalyses the reaction 5-aminopentanoate + 7 malonyl-CoA + acetyl-CoA + 11 NADPH + 17 H(+) = wortmanamide A + 7 CO2 + 11 NADP(+) + 8 CoA + 6 H2O. The enzyme catalyses 5-aminopentanoate + 8 malonyl-CoA + acetyl-CoA + 13 NADPH + 20 H(+) = wortmanamide B + 8 CO2 + 13 NADP(+) + 9 CoA + 7 H2O. It participates in secondary metabolite biosynthesis. Its function is as follows. Polyketide synthase-nonribosomal peptide synthetase; part of the gene cluster that mediates the biosynthesis of wortmanamides A and B, reduced long-chain polyketides amidated with a specific omega-amino acid, 5-aminopentanoic acid (5PA). The PKS modules of TwmB are involved in the synthesis of the polyketide backbone, whereas the non-canonical C domain of TwmB is a bonafide condensation domain that specifically selects 5PA and catalyzes amidation to release polyketide chain. The C domain clearly prefers C16 and C18 fatty acyl substrates, which is consistent with simultaneous formation of both octaketide and nonaketide acyl amides wortmanamides A and B. Because TwmB lacks a designated enoylreductase (ER) domain, the required activity is provided the enoyl reductase TwmE. The roles of the remaining enzymes have still to be clarified. The chain is Polyketide synthase-nonribosomal peptide synthetase TwmB from Talaromyces wortmannii (Penicillium wortmannii).